Reading from the N-terminus, the 350-residue chain is Protein RecA (350 aa).

Residue 65-72 (GPESSGKT) coordinates ATP.

It belongs to the RecA family.

It localises to the cytoplasm. Can catalyze the hydrolysis of ATP in the presence of single-stranded DNA, the ATP-dependent uptake of single-stranded DNA by duplex DNA, and the ATP-dependent hybridization of homologous single-stranded DNAs. It interacts with LexA causing its activation and leading to its autocatalytic cleavage. The sequence is that of Protein RecA from Nautilia profundicola (strain ATCC BAA-1463 / DSM 18972 / AmH).